We begin with the raw amino-acid sequence, 100 residues long: Small ribosomal subunit protein uS14c (100 aa).

This sequence belongs to the universal ribosomal protein uS14 family. As to quaternary structure, part of the 30S ribosomal subunit.

The protein localises to the plastid. It localises to the chloroplast. Its function is as follows. Binds 16S rRNA, required for the assembly of 30S particles. The sequence is that of Small ribosomal subunit protein uS14c from Calycanthus floridus var. glaucus (Eastern sweetshrub).